A 128-amino-acid chain; its full sequence is NHP2-like protein 1 (128 aa).

The residue at position 1 (methionine 1) is an N-acetylmethionine. At threonine 2 the chain carries N-acetylthreonine; in NHP2-like protein 1, N-terminally processed. N6-acetyllysine is present on lysine 21. Residues 36 to 48 (RKGANEATKTLNR) form an interaction with U4 snRNA and U4atac snRNA region. The tract at residues 96-128 (SRPVIACSVTIKEGSQLKQQIQSIQQSIERLLV) is important for U4 snRNA-binding. The residue at position 122 (serine 122) is a Phosphoserine.

The protein belongs to the eukaryotic ribosomal protein eL8 family. As to quaternary structure, identified in the spliceosome B complex. Component of the U4/U6-U5 tri-snRNP complex composed of the U4, U6 and U5 snRNAs and at least PRPF3, PRPF4, PRPF6, PRPF8, PRPF31, SNRNP200, TXNL4A, WDR57, SNRNP40, DDX23, CD2BP2, PPIH, NHP2L1, EFTUD2, SART1 and USP39. Interacts with RAD17 and PRPF31. The complex formed by SNU13 and PRPF31 binds U4 snRNA. The complex formed by SNU13 and PRPF31 also binds U4atac snRNA, a characteristic component of specific, less abundant spliceosomal complexes. Part of the small subunit (SSU) processome, composed of more than 70 proteins and the RNA chaperone small nucleolar RNA (snoRNA) U3. Core component of box C/D small nucleolar ribonucleoprotein (snoRNP) particles; the core proteins SNU13, NOP56, NOP58 and FBL or FBLL1 assemble stepwise onto the snoRNA.

The protein localises to the nucleus. The protein resides in the nucleolus. Part of the small subunit (SSU) processome, first precursor of the small eukaryotic ribosomal subunit. During the assembly of the SSU processome in the nucleolus, many ribosome biogenesis factors, an RNA chaperone and ribosomal proteins associate with the nascent pre-rRNA and work in concert to generate RNA folding, modifications, rearrangements and cleavage as well as targeted degradation of pre-ribosomal RNA by the RNA exosome. Involved in pre-mRNA splicing as component of the spliceosome. Binds to the 5'-stem-loop of U4 snRNA and thereby contributes to spliceosome assembly. The protein undergoes a conformational change upon RNA-binding. Core component of box C/D small nucleolar ribonucleoprotein (snoRNP) complexes that function in methylation of multiple sites on ribosomal RNAs (rRNAs) and messenger RNAs (mRNAs). The protein is NHP2-like protein 1 of Bos taurus (Bovine).